A 932-amino-acid chain; its full sequence is Calpain-like protease palB/cpr-8 (932 aa).

Positions 96–419 (KLHGNIFPPW…FDSLYVNWSP (324 aa)) constitute a Calpain catalytic domain. Active-site residues include Cys-178, His-346, and Asn-366. The interval 890–932 (QGHVTEGSDDDGGGGGGGGGGVHVEISSDGVVSIGEWEVADED) is disordered. The segment covering 902–911 (GGGGGGGGGV) has biased composition (gly residues).

This sequence belongs to the peptidase C2 family. PalB/RIM13 subfamily.

Required for the proteolytic cleavage of the transcription factor pacc-1 in response to alkaline ambient pH. This is Calpain-like protease palB/cpr-8 (cpr-8) from Neurospora crassa (strain ATCC 24698 / 74-OR23-1A / CBS 708.71 / DSM 1257 / FGSC 987).